Consider the following 305-residue polypeptide: Heterogeneous nuclear ribonucleoprotein A0 (305 aa).

Methionine 1 bears the N-acetylmethionine mark. In terms of domain architecture, RRM 1 spans 7–86 (CKLFIGGLNV…VELKRAVSRE (80 aa)). Serine 68 carries the post-translational modification Phosphoserine. Lysine 80 participates in a covalent cross-link: Glycyl lysine isopeptide (Lys-Gly) (interchain with G-Cter in SUMO2). Phosphoserine; by MAPKAPK2 is present on serine 84. Residues lysine 96, lysine 98, lysine 99, and lysine 106 each participate in a glycyl lysine isopeptide (Lys-Gly) (interchain with G-Cter in SUMO2) cross-link. Residues 98-175 (KKLFVGGLKG…HRVEVKKAVP (78 aa)) enclose the RRM 2 domain. Lysine 133 carries the N6-acetyllysine modification. Arginine 139 carries the post-translational modification Omega-N-methylarginine. Residues lysine 154, lysine 159, lysine 172, and lysine 176 each participate in a glycyl lysine isopeptide (Lys-Gly) (interchain with G-Cter in SUMO2) cross-link. Disordered regions lie at residues 178–211 (DIHA…RDQN) and 265–305 (QSSY…GGSF). Composition is skewed to gly residues over residues 181–211 (AGGG…RDQN) and 272–284 (KSGG…GSWG). An Omega-N-methylarginine modification is found at arginine 286. Residues 292-305 (YRGGYGGGYGGGSF) are compositionally biased toward gly residues. Arginine 293 is modified (asymmetric dimethylarginine; alternate). Position 293 is a dimethylated arginine; alternate (arginine 293). Residue arginine 293 is modified to Omega-N-methylarginine; alternate.

Post-translationally, phosphorylated at Ser-84 by MAPKAPK2 in response to LPS treatment, promoting stabilization of GADD45A mRNA. In terms of processing, arg-293 is dimethylated, probably to asymmetric dimethylarginine.

It localises to the nucleus. Its function is as follows. mRNA-binding component of ribonucleosomes. Specifically binds AU-rich element (ARE)-containing mRNAs. Involved in post-transcriptional regulation of cytokines mRNAs. The sequence is that of Heterogeneous nuclear ribonucleoprotein A0 (Hnrnpa0) from Mus musculus (Mouse).